The primary structure comprises 219 residues: Mitochondrial fission factor homolog A (219 aa).

The Cytoplasmic portion of the chain corresponds to 1–199; the sequence is MAEINRMQYE…ENKERVKHEM (199 aa). The stretch at 164–194 forms a coiled coil; that stretch reads DLALADAASLRRQIIKLNRRLLLLEEENKER. Residues 200–217 traverse the membrane as a helical; Anchor for type IV membrane protein segment; the sequence is TMYSIIIIFGLLNSWLWL. Topologically, residues 218–219 are extracellular; sequence RR.

This sequence belongs to the Tango11 family.

It is found in the mitochondrion outer membrane. The protein localises to the peroxisome. It localises to the cytoplasmic vesicle. The protein resides in the secretory vesicle. Its subcellular location is the synaptic vesicle. Its function is as follows. Plays a role in mitochondrial and peroxisomal fission. Promotes the recruitment and association of the fission mediator dynamin-related protein 1 (DNM1L) to the mitochondrial surface. This is Mitochondrial fission factor homolog A (mff-a) from Xenopus laevis (African clawed frog).